A 259-amino-acid chain; its full sequence is 2,3-dihydroxy-2,3-dihydro-p-cumate dehydrogenase (259 aa).

18–42 (VTGGAHGIGLGIVERLLGLGARVTA) lines the NAD(+) pocket. The Proton acceptor role is filled by tyrosine 163.

It belongs to the short-chain dehydrogenases/reductases (SDR) family.

The enzyme catalyses (2R,3S)-2,3-dihydroxy-2,3-dihydro-p-cumate + NAD(+) = 2,3-dihydroxy-p-cumate + NADH + H(+). Its pathway is aromatic compound metabolism; p-cumate degradation; acetaldehyde and pyruvate from p-cumate: step 2/7. In Pseudomonas putida (strain ATCC 700007 / DSM 6899 / JCM 31910 / BCRC 17059 / LMG 24140 / F1), this protein is 2,3-dihydroxy-2,3-dihydro-p-cumate dehydrogenase (cmtB).